We begin with the raw amino-acid sequence, 858 residues long: Bifunctional uridylyltransferase/uridylyl-removing enzyme (858 aa).

A uridylyltransferase region spans residues 1 to 324 (MSAHAAPSPE…PATSGITRVL (324 aa)). The segment at 325–681 (SADRFVEKQG…ARPSPIGDAL (357 aa)) is uridylyl-removing. In terms of domain architecture, HD spans 443–565 (VDQHILMVLR…VGNERYLTAL (123 aa)). 2 ACT domains span residues 682 to 763 (QVLV…PSKG) and 790 to 858 (ILSV…AIAV).

This sequence belongs to the GlnD family. It depends on Mg(2+) as a cofactor.

The catalysed reaction is [protein-PII]-L-tyrosine + UTP = [protein-PII]-uridylyl-L-tyrosine + diphosphate. It carries out the reaction [protein-PII]-uridylyl-L-tyrosine + H2O = [protein-PII]-L-tyrosine + UMP + H(+). With respect to regulation, uridylyltransferase (UTase) activity is inhibited by glutamine, while glutamine activates uridylyl-removing (UR) activity. Modifies, by uridylylation and deuridylylation, the PII regulatory proteins (GlnB and homologs), in response to the nitrogen status of the cell that GlnD senses through the glutamine level. Under low glutamine levels, catalyzes the conversion of the PII proteins and UTP to PII-UMP and PPi, while under higher glutamine levels, GlnD hydrolyzes PII-UMP to PII and UMP (deuridylylation). Thus, controls uridylylation state and activity of the PII proteins, and plays an important role in the regulation of nitrogen assimilation and metabolism. This chain is Bifunctional uridylyltransferase/uridylyl-removing enzyme, found in Burkholderia orbicola (strain MC0-3).